A 498-amino-acid chain; its full sequence is ATP synthase subunit beta, chloroplastic (498 aa).

172–179 provides a ligand contact to ATP; sequence GGAGVGKT.

This sequence belongs to the ATPase alpha/beta chains family. In terms of assembly, F-type ATPases have 2 components, CF(1) - the catalytic core - and CF(0) - the membrane proton channel. CF(1) has five subunits: alpha(3), beta(3), gamma(1), delta(1), epsilon(1). CF(0) has four main subunits: a(1), b(1), b'(1) and c(9-12).

It localises to the plastid. Its subcellular location is the chloroplast thylakoid membrane. It carries out the reaction ATP + H2O + 4 H(+)(in) = ADP + phosphate + 5 H(+)(out). Its function is as follows. Produces ATP from ADP in the presence of a proton gradient across the membrane. The catalytic sites are hosted primarily by the beta subunits. This Balaka seemannii protein is ATP synthase subunit beta, chloroplastic.